A 433-amino-acid polypeptide reads, in one-letter code: Steroid hormone receptor ERR2 (433 aa).

The tract at residues 1–38 is disordered; sequence MSSDDRHLGSSCGSFIKTEPSSPSSGIDALSHHSPSGS. Residues 28–38 are compositionally biased toward low complexity; the sequence is DALSHHSPSGS. The interaction with NANOG stretch occupies residues 93 to 211; sequence YMLNAIPKRL…SPPAKKPLTK (119 aa). Residues 100–186 constitute a DNA-binding region (nuclear receptor); the sequence is KRLCLVCGDI…RVRGGRQKYK (87 aa). NR C4-type zinc fingers lie at residues 103–123 and 139–163; these read CLVC…CEAC and CPAT…FMKC. The interval 203–433 is essential for ESRRB transcriptional activity and interaction with NCOA3; that stretch reads PPAKKPLTKI…LFLEMLEAKV (231 aa). One can recognise an NR LBD domain in the interval 208-432; that stretch reads PLTKIVSYLL…KLFLEMLEAK (225 aa).

Belongs to the nuclear hormone receptor family. NR3 subfamily. Binds DNA as a monomer. Interacts with NR0B1; represses ESRRB activity at the GATA6 promoter. Interacts with NANOG; reciprocally modulates their transcriptional activities and activates POU5F1 expression. Interacts with NCOA3; mediates the interaction between ESRRB and RNA polymerase II complexes and allows NCOA3 corecruitment to ESRRB, KLF4, NANOG, and SOX2 enhancer regions to trigger ESRRB-dependent gene activation involved in self-renewal and pluripotency. Interacts with KDM1A; co-occupes the core set of ESRRB targets including ELF5 and EOMES. Interacts with the multiprotein complex Integrator, at least composed of INTS1, INTS2, INTS3, INTS4, INTS5, INTS6, INTS7, INTS8, INTS9/RC74, INTS10, INTS11/CPSF3L and INTS12; ESRRB is probably not a core component of the integrator complex and associates to integrator via its interaction with INTS1 and INTS9; attracts the transcriptional machinery. Interacts with JARID2. Interacts with POU5F1; recruits ESRRB near the POU5F1-SOX2 element in the NANOG proximal promoter leading to activation of NANOG expression; the interaction is DNA independent. Interacts with NFE2L2; represses NFE2L2 transcriptional activity. Isoform 1 interacts with ESR1. Post-translationally, acetylated by PCAF/KAT2 (in vitro).

It localises to the nucleus. Its subcellular location is the cytoplasm. The protein localises to the chromosome. Its function is as follows. Transcription factor that binds a canonical ESRRB recognition (ERRE) sequence 5'TCAAGGTCA-3' localized on promoter and enhancer of targets genes regulating their expression or their transcription activity. Plays a role, in a LIF-independent manner, in maintainance of self-renewal and pluripotency of embryonic and trophoblast stem cells through different signaling pathways including FGF signaling pathway and Wnt signaling pathways. Involved in morula development (2-16 cells embryos) by acting as a regulator at the 8-cell stage. Upon FGF signaling pathway activation, interacts with KDM1A by directly binding to enhancer site of ELF5 and EOMES and activating their transcription leading to self-renewal of trophoblast stem cells. Also regulates expression of multiple rod-specific genes and is required for survival of this cell type. Plays a role as transcription factor activator of GATA6, NR0B1, POU5F1 and PERM1. Plays a role as transcription factor repressor of NFE2L2 transcriptional activity and ESR1 transcriptional activity. During mitosis remains bound to a subset of interphase target genes, including pluripotency regulators, through the canonical ESRRB recognition (ERRE) sequence, leading to their transcriptional activation in early G1 phase. Can coassemble on structured DNA elements with other transcription factors like SOX2, POU5F1, KDM1A and NCOA3 to trigger ESRRB-dependent gene activation. This mechanism, in the case of SOX2 corecruitment prevents the embryonic stem cells (ESCs) to epiblast stem cells (EpiSC) transition through positive regulation of NR0B1 that inhibits the EpiSC transcriptional program. Also plays a role inner ear development by controlling expression of ion channels and transporters and in early placentation. Functionally, transcription factor that binds a canonical ESRRB recognition (ERRE) sequence 5'TCAAGGTCA-3' localized on promoter and enhancer of targets genes regulating their expression or their transcription activity. Positively regulates ESR1 transcriptional activity upon E2 stimulation. The polypeptide is Steroid hormone receptor ERR2 (Homo sapiens (Human)).